Consider the following 645-residue polypeptide: 1-deoxy-D-xylulose-5-phosphate synthase 1 (645 aa).

Thiamine diphosphate-binding positions include histidine 79 and 120 to 122 (GHS). Aspartate 151 lines the Mg(2+) pocket. Thiamine diphosphate contacts are provided by residues 152-153 (GS), asparagine 180, tyrosine 291, and glutamate 373. Mg(2+) is bound at residue asparagine 180.

This sequence belongs to the transketolase family. DXPS subfamily. Homodimer. It depends on Mg(2+) as a cofactor. The cofactor is thiamine diphosphate.

It carries out the reaction D-glyceraldehyde 3-phosphate + pyruvate + H(+) = 1-deoxy-D-xylulose 5-phosphate + CO2. Its pathway is metabolic intermediate biosynthesis; 1-deoxy-D-xylulose 5-phosphate biosynthesis; 1-deoxy-D-xylulose 5-phosphate from D-glyceraldehyde 3-phosphate and pyruvate: step 1/1. In terms of biological role, catalyzes the acyloin condensation reaction between C atoms 2 and 3 of pyruvate and glyceraldehyde 3-phosphate to yield 1-deoxy-D-xylulose-5-phosphate (DXP). The sequence is that of 1-deoxy-D-xylulose-5-phosphate synthase 1 from Rhodospirillum rubrum (strain ATCC 11170 / ATH 1.1.1 / DSM 467 / LMG 4362 / NCIMB 8255 / S1).